The chain runs to 198 residues: Probable GTP-binding protein EngB (198 aa).

In terms of domain architecture, EngB-type G spans 22–195 (NRVEVAFVGR…IDNLFLEFAT (174 aa)). GTP-binding positions include 30–37 (GRSNVGKS), 57–61 (GKTRL), 75–78 (DLPG), 142–145 (TKSD), and 174–176 (FSS). Positions 37 and 59 each coordinate Mg(2+).

This sequence belongs to the TRAFAC class TrmE-Era-EngA-EngB-Septin-like GTPase superfamily. EngB GTPase family. Requires Mg(2+) as cofactor.

Necessary for normal cell division and for the maintenance of normal septation. In Clostridium beijerinckii (strain ATCC 51743 / NCIMB 8052) (Clostridium acetobutylicum), this protein is Probable GTP-binding protein EngB.